The following is a 420-amino-acid chain: Tyrosine--tRNA ligase (420 aa).

L-tyrosine is bound at residue Tyr36. Residues 41–50 (PTADSLHIGH) carry the 'HIGH' region motif. L-tyrosine-binding residues include Tyr170 and Gln174. A 'KMSKS' region motif is present at residues 231 to 235 (KFGKT). Lys234 serves as a coordination point for ATP. The 68-residue stretch at 353-420 (RNIVEVIVET…KKKYFMVNYK (68 aa)) folds into the S4 RNA-binding domain.

This sequence belongs to the class-I aminoacyl-tRNA synthetase family. TyrS type 1 subfamily. In terms of assembly, homodimer.

It is found in the cytoplasm. The enzyme catalyses tRNA(Tyr) + L-tyrosine + ATP = L-tyrosyl-tRNA(Tyr) + AMP + diphosphate + H(+). Its function is as follows. Catalyzes the attachment of tyrosine to tRNA(Tyr) in a two-step reaction: tyrosine is first activated by ATP to form Tyr-AMP and then transferred to the acceptor end of tRNA(Tyr). The sequence is that of Tyrosine--tRNA ligase from Staphylococcus saprophyticus subsp. saprophyticus (strain ATCC 15305 / DSM 20229 / NCIMB 8711 / NCTC 7292 / S-41).